Reading from the N-terminus, the 188-residue chain is Peptidyl-tRNA hydrolase (188 aa).

Residue Phe15 participates in tRNA binding. Catalysis depends on His20, which acts as the Proton acceptor. 3 residues coordinate tRNA: Tyr64, Asn66, and Asn112.

It belongs to the PTH family. In terms of assembly, monomer.

The protein resides in the cytoplasm. The enzyme catalyses an N-acyl-L-alpha-aminoacyl-tRNA + H2O = an N-acyl-L-amino acid + a tRNA + H(+). In terms of biological role, hydrolyzes ribosome-free peptidyl-tRNAs (with 1 or more amino acids incorporated), which drop off the ribosome during protein synthesis, or as a result of ribosome stalling. Its function is as follows. Catalyzes the release of premature peptidyl moieties from peptidyl-tRNA molecules trapped in stalled 50S ribosomal subunits, and thus maintains levels of free tRNAs and 50S ribosomes. This Borrelia turicatae (strain 91E135) protein is Peptidyl-tRNA hydrolase.